A 1148-amino-acid chain; its full sequence is Trafficking protein particle complex subunit 9 (1148 aa).

Phosphoserine occurs at positions 566 and 953.

This sequence belongs to the NIBP family. Component of the multisubunit TRAPP (transport protein particle) complex, which includes at least TRAPPC2, TRAPPC2L, TRAPPC3, TRAPPC3L, TRAPPC4, TRAPPC5, TRAPPC8, TRAPPC9, TRAPPC10, TRAPPC11 and TRAPPC12. Directly interacts with IKBKB and MAP3K14. In terms of tissue distribution, expressed at high levels in muscle and kidney and to a lower extent in brain, heart and placenta.

It localises to the golgi apparatus. The protein resides in the cis-Golgi network. It is found in the endoplasmic reticulum. Its subcellular location is the cytoplasm. Its function is as follows. Functions as an activator of NF-kappa-B through increased phosphorylation of the IKK complex. May function in neuronal cells differentiation. May play a role in vesicular transport from endoplasmic reticulum to Golgi. The sequence is that of Trafficking protein particle complex subunit 9 (TRAPPC9) from Homo sapiens (Human).